The following is a 117-amino-acid chain: Protein OPG035 (117 aa).

The protein belongs to the poxviridae OPG035 family.

Its function is as follows. Bcl-2-like protein which contributes to virulence by preventing host NF-kappa-B activation in response to pro-inflammatory stimuli such as TNF-alpha or IL1B. This is Protein OPG035 (OPG035) from Homo sapiens (Human).